The primary structure comprises 391 residues: S-adenosylmethionine synthase (391 aa).

H16 is an ATP binding site. Residue D18 participates in Mg(2+) binding. Position 44 (E44) interacts with K(+). Residues E57 and Q101 each contribute to the L-methionine site. Positions Q101 to A111 are flexible loop. ATP is bound by residues D166–K168, D244, R250–K251, A267, and K271. An L-methionine-binding site is contributed by D244. K275 is an L-methionine binding site.

It belongs to the AdoMet synthase family. Homotetramer; dimer of dimers. It depends on Mg(2+) as a cofactor. Requires K(+) as cofactor.

The protein resides in the cytoplasm. It catalyses the reaction L-methionine + ATP + H2O = S-adenosyl-L-methionine + phosphate + diphosphate. Its pathway is amino-acid biosynthesis; S-adenosyl-L-methionine biosynthesis; S-adenosyl-L-methionine from L-methionine: step 1/1. Catalyzes the formation of S-adenosylmethionine (AdoMet) from methionine and ATP. The overall synthetic reaction is composed of two sequential steps, AdoMet formation and the subsequent tripolyphosphate hydrolysis which occurs prior to release of AdoMet from the enzyme. The protein is S-adenosylmethionine synthase of Zymomonas mobilis subsp. mobilis (strain ATCC 31821 / ZM4 / CP4).